The chain runs to 188 residues: Insulin-like growth factor 1 (188 aa).

Residues 45–73 (GPETLCGAELVDTLQFVCGERGFYFSKPT) are b. 3 disulfides stabilise this stretch: Cys-50-Cys-92, Cys-62-Cys-105, and Cys-91-Cys-96. The c stretch occupies residues 74–85 (GYGPSSRRSHNR). The interval 86–106 (GIVDECCFQSCELRRLEMYCA) is a. Positions 107–114 (PVKSGKAA) are d. The propeptide at 115–188 (RSVRAQRHTD…GNTGGRNYRM (74 aa)) is e peptide. The interval 115–188 (RSVRAQRHTD…GNTGGRNYRM (74 aa)) is disordered. Residues 140–153 (RGTERRTAQHPDKT) are compositionally biased toward basic and acidic residues.

This sequence belongs to the insulin family. In terms of tissue distribution, all the isoforms are expressed in embryos, juvenile and adult liver, muscle and brain. At least one isoform is expressed in heart, kidney, testes, ovary, adipose tissue and spleen of juvenile salmon.

The protein localises to the secreted. Functionally, the insulin-like growth factors, isolated from plasma, are structurally and functionally related to insulin but have a much higher growth-promoting activity. Acts as a ligand for IGF1R. Binds to the alpha subunit of IGF1R, leading to the activation of the intrinsic tyrosine kinase activity which autophosphorylates tyrosine residues in the beta subunit thus initiatiating a cascade of down-stream signaling events leading to activation of the PI3K-AKT/PKB and the Ras-MAPK pathways. Binds to integrins. Its binding to integrins and subsequent ternary complex formation with integrins and IGFR1 are essential for IGF1 signaling. This is Insulin-like growth factor 1 from Oncorhynchus kisutch (Coho salmon).